Reading from the N-terminus, the 88-residue chain is Co-chaperonin GroES (88 aa).

The protein belongs to the GroES chaperonin family. As to quaternary structure, heptamer of 7 subunits arranged in a ring. Interacts with the chaperonin GroEL.

It localises to the cytoplasm. Functionally, together with the chaperonin GroEL, plays an essential role in assisting protein folding. The GroEL-GroES system forms a nano-cage that allows encapsulation of the non-native substrate proteins and provides a physical environment optimized to promote and accelerate protein folding. GroES binds to the apical surface of the GroEL ring, thereby capping the opening of the GroEL channel. In Rubrobacter xylanophilus (strain DSM 9941 / JCM 11954 / NBRC 16129 / PRD-1), this protein is Co-chaperonin GroES.